Reading from the N-terminus, the 148-residue chain is Cofilin/actin-depolymerizing factor homolog (148 aa).

Residues 4 to 143 (GVTVSDVCKT…SREAVEEKLR (140 aa)) form the ADF-H domain. The short motif at 19-23 (KKDKK) is the Nuclear localization signal element.

This sequence belongs to the actin-binding proteins ADF family. In terms of processing, phosphorylated in vitro by protein kinase LIMK1. Phosphorylation is required for inactivation of tsr and for cell proliferation and axon growth. Phosphorylation is negatively regulated by the panthothenate kinase fbl which catalyzes the first step in the conversion of panthothenic acid to coenzyme A. Dephosphorylated by protein phosphatase ssh which activates tsr.

Its subcellular location is the cytoplasm. It localises to the cytoskeleton. It is found in the nucleus matrix. In terms of biological role, exhibits F-actin depolymerizing activity and regulates actin cytoskeleton dynamics. Required for cytokinesis in both mitotic and meiotic cells and for aster migration and separation. Promotes cell motility during ovary development and oogenesis. During larval development, required for the cell rearrangement needed for formation of terminal filaments which are stacks of somatic cells that are important for the initiation of ovarioles. Also required for border cell migration during oogenesis. During border cell migration, required for actin turnover and lamellipodial protrusion. Required for the establishment of planar cell polarity (PCP) where cells adopt a uniform orientation within the plane of an epithelium. During establishment of PCP, required for the redistribution of the PCP core proteins fz and stan/fmi to the proximodistal cell boundary. During pupal development, required for elongation of the retinal cell body and for rhabdomere morphogenesis. Required for mushroom body neuroblast proliferation and axon growth. Plays a role in the positive regulation of protein secretion. Plays a role in the regulation of nuclear localization of actin. Required for the maintenance of epithelial integrity by controlling cell junctions and is also necessary for cell survival and tissue growth through regulation of JNK and yki signaling. In Drosophila melanogaster (Fruit fly), this protein is Cofilin/actin-depolymerizing factor homolog.